The sequence spans 614 residues: Probable pectinesterase/pectinesterase inhibitor 13 (614 aa).

The chain crosses the membrane as a helical span at residues 25-45 (IIVGTVSLLVVVAAIVGGAFA). The interval 55–102 (QQQQQQQAKNHNKSGSGNNVVKDSDKKSPSPPTPSQKAPVSAAQSVKP) is disordered. Residues Asn66, Asn128, Asn197, Asn243, Asn301, Asn351, and Asn367 are each glycosylated (N-linked (GlcNAc...) asparagine). The interval 103 to 255 (GQGDKIIQTL…QVLTSNSLAL (153 aa)) is pectinesterase inhibitor 13. A pectinesterase 13 region spans residues 301 to 598 (NATVAKDGSG…YTVGPFLQGD (298 aa)). 2 residues coordinate substrate: Thr376 and Gln406. Asp429 (proton donor; for pectinesterase activity) is an active-site residue. A disulfide bridge connects residues Cys443 and Cys463. The Nucleophile; for pectinesterase activity role is filled by Asp450. 2 residues coordinate substrate: Arg518 and Trp520. 2 N-linked (GlcNAc...) asparagine glycosylation sites follow: Asn522 and Asn588.

The protein in the N-terminal section; belongs to the PMEI family. This sequence in the C-terminal section; belongs to the pectinesterase family. Expressed in flower buds.

It is found in the membrane. It carries out the reaction [(1-&gt;4)-alpha-D-galacturonosyl methyl ester](n) + n H2O = [(1-&gt;4)-alpha-D-galacturonosyl](n) + n methanol + n H(+). It functions in the pathway glycan metabolism; pectin degradation; 2-dehydro-3-deoxy-D-gluconate from pectin: step 1/5. Functionally, acts in the modification of cell walls via demethylesterification of cell wall pectin. The protein is Probable pectinesterase/pectinesterase inhibitor 13 (PME13) of Arabidopsis thaliana (Mouse-ear cress).